Reading from the N-terminus, the 514-residue chain is ATP synthase subunit alpha (514 aa).

Residue 170–177 participates in ATP binding; it reads GDRQIGKT.

This sequence belongs to the ATPase alpha/beta chains family. As to quaternary structure, F-type ATPases have 2 components, CF(1) - the catalytic core - and CF(0) - the membrane proton channel. CF(1) has five subunits: alpha(3), beta(3), gamma(1), delta(1), epsilon(1). CF(0) has three main subunits: a(1), b(2) and c(9-12). The alpha and beta chains form an alternating ring which encloses part of the gamma chain. CF(1) is attached to CF(0) by a central stalk formed by the gamma and epsilon chains, while a peripheral stalk is formed by the delta and b chains.

The protein resides in the cell inner membrane. It carries out the reaction ATP + H2O + 4 H(+)(in) = ADP + phosphate + 5 H(+)(out). In terms of biological role, produces ATP from ADP in the presence of a proton gradient across the membrane. The alpha chain is a regulatory subunit. The polypeptide is ATP synthase subunit alpha (Marinobacter nauticus (strain ATCC 700491 / DSM 11845 / VT8) (Marinobacter aquaeolei)).